Consider the following 376-residue polypeptide: Thymidine kinase (376 aa).

The interval M1–E39 is disordered. Positions S19–R32 are enriched in basic residues. ATP is bound at residue G56–T63. The active-site Proton acceptor is the E83. Substrate-binding residues include Y101 and Q125. R216 is a binding site for ATP. R222 contacts substrate. Positions G260–P280 are disordered.

This sequence belongs to the herpesviridae thymidine kinase family. As to quaternary structure, homodimer.

It catalyses the reaction thymidine + ATP = dTMP + ADP + H(+). Catalyzes the transfer of the gamma-phospho group of ATP to thymidine to generate dTMP in the salvage pathway of pyrimidine synthesis. The dTMP serves as a substrate for DNA polymerase during viral DNA replication. Allows the virus to be reactivated and to grow in non-proliferative cells lacking a high concentration of phosphorylated nucleic acid precursors. This Human herpesvirus 1 (strain KOS) (HHV-1) protein is Thymidine kinase.